A 594-amino-acid polypeptide reads, in one-letter code: MAIFAMGWQKPDNVAGSSAPAIMVGLFVATGGLLLGYDTGTINGILAMKSFKDHFSTGYIDGNGQPGIYPKESALIVAMLSAGTAIGALLAAPLGDHYGRRRSLIGAIGIFVIGAILQVCAYNIDLLVAGRTVAGVGIGIVSVLVPLYQSEMAPKWIRGTLVCTYQLSITMGLLAAAVVNILTYKLKTAAAYRVPIGLQLTWACVLALGLTVLPETPRYLIKRGDKNAAALSLSRLRRLDITHPALVEELAEIEANHQYEMALGPDSYKDILFGEPHLGRRTFTGCCLQMLQQLTGVNFIMYYGTTFFNNAGVGNPFKISLIMQVINTASTIPGLFVVESWGRRRLLMVGAIGMAICQLLIAAFATASGSNNLSAQNKVLITFVAIYIFFFAASWGPVVWVVTSEIYPLKVRAKSMSITTASNWFLNFGIAYGTPYMQTNSAASDESSIDLGSKVFFVWGAFCIVAVGFVWCMVYETSKISLEQIDEMYERVDHAWHSRRFEPSWSFQEMRDLGFSDGGIPPTQQLQQQPQQPQQQQQQHHQQQQHQLQVDLQQSQSRTSNSSTSQTDTGGSNNTGASQDDKLVASLGNIDLSY.

Residues 1–13 (MAIFAMGWQKPDN) are Cytoplasmic-facing. A helical membrane pass occupies residues 14-34 (VAGSSAPAIMVGLFVATGGLL). Residues 35–73 (LGYDTGTINGILAMKSFKDHFSTGYIDGNGQPGIYPKES) are Extracellular-facing. Residues 74–94 (ALIVAMLSAGTAIGALLAAPL) traverse the membrane as a helical segment. At 95-103 (GDHYGRRRS) the chain is on the cytoplasmic side. Residues 104–124 (LIGAIGIFVIGAILQVCAYNI) form a helical membrane-spanning segment. A topological domain (extracellular) is located at residue Asp-125. The helical transmembrane segment at 126-146 (LLVAGRTVAGVGIGIVSVLVP) threads the bilayer. Topologically, residues 147-159 (LYQSEMAPKWIRG) are cytoplasmic. The helical transmembrane segment at 160-180 (TLVCTYQLSITMGLLAAAVVN) threads the bilayer. Over 181-193 (ILTYKLKTAAAYR) the chain is Extracellular. A helical transmembrane segment spans residues 194-214 (VPIGLQLTWACVLALGLTVLP). The Cytoplasmic segment spans residues 215–293 (ETPRYLIKRG…TGCCLQMLQQ (79 aa)). Residues 294 to 314 (LTGVNFIMYYGTTFFNNAGVG) traverse the membrane as a helical segment. The Extracellular segment spans residues 315 to 318 (NPFK). A helical membrane pass occupies residues 319 to 339 (ISLIMQVINTASTIPGLFVVE). The Cytoplasmic portion of the chain corresponds to 340 to 345 (SWGRRR). The chain crosses the membrane as a helical span at residues 346–366 (LLMVGAIGMAICQLLIAAFAT). At 367-378 (ASGSNNLSAQNK) the chain is on the extracellular side. An N-linked (GlcNAc...) asparagine glycan is attached at Asn-372. The chain crosses the membrane as a helical span at residues 379–403 (VLITFVAIYIFFFAASWGPVVWVVT). The Cytoplasmic portion of the chain corresponds to 404–415 (SEIYPLKVRAKS). The helical transmembrane segment at 416–436 (MSITTASNWFLNFGIAYGTPY) threads the bilayer. At 437-454 (MQTNSAASDESSIDLGSK) the chain is on the extracellular side. Residues 455–475 (VFFVWGAFCIVAVGFVWCMVY) traverse the membrane as a helical segment. Residues 476–594 (ETSKISLEQI…ASLGNIDLSY (119 aa)) are Cytoplasmic-facing. A disordered region spans residues 512-594 (DLGFSDGGIP…ASLGNIDLSY (83 aa)). The span at 524-576 (QQLQQQPQQPQQQQQQHHQQQQHQLQVDLQQSQSRTSNSSTSQTDTGGSNNTG) shows a compositional bias: low complexity.

Belongs to the major facilitator superfamily. Sugar transporter (TC 2.A.1.1) family.

The protein localises to the membrane. Probable glucose transporter. Involved in sugar transport, carbon catabolite repression, and initiation of conidiophore development. This chain is Probable glucose transporter rco-3 (rco-3), found in Neurospora crassa (strain ATCC 24698 / 74-OR23-1A / CBS 708.71 / DSM 1257 / FGSC 987).